The sequence spans 351 residues: Holliday junction branch migration complex subunit RuvB (351 aa).

The segment covering 1 to 12 (MGRFEDDAEVED) has biased composition (acidic residues). The disordered stretch occupies residues 1–23 (MGRFEDDAEVEDREVSPALTVGE). The tract at residues 1–191 (MGRFEDDAEV…FGFTAHMDFY (191 aa)) is large ATPase domain (RuvB-L). ATP contacts are provided by residues Leu30, Arg31, Gly72, Lys75, Thr76, Ser77, 138–140 (EDF), Arg181, Tyr191, and Arg228. Thr76 contacts Mg(2+). Positions 192-262 (EPVELERVLA…IAKSALEVYD (71 aa)) are small ATPAse domain (RuvB-S). The head domain (RuvB-H) stretch occupies residues 265–351 (ELGLDRLDRA…TGIGQAGLFD (87 aa)). Positions 320 and 325 each coordinate DNA.

The protein belongs to the RuvB family. Homohexamer. Forms an RuvA(8)-RuvB(12)-Holliday junction (HJ) complex. HJ DNA is sandwiched between 2 RuvA tetramers; dsDNA enters through RuvA and exits via RuvB. An RuvB hexamer assembles on each DNA strand where it exits the tetramer. Each RuvB hexamer is contacted by two RuvA subunits (via domain III) on 2 adjacent RuvB subunits; this complex drives branch migration. In the full resolvosome a probable DNA-RuvA(4)-RuvB(12)-RuvC(2) complex forms which resolves the HJ.

It is found in the cytoplasm. It carries out the reaction ATP + H2O = ADP + phosphate + H(+). In terms of biological role, the RuvA-RuvB-RuvC complex processes Holliday junction (HJ) DNA during genetic recombination and DNA repair, while the RuvA-RuvB complex plays an important role in the rescue of blocked DNA replication forks via replication fork reversal (RFR). RuvA specifically binds to HJ cruciform DNA, conferring on it an open structure. The RuvB hexamer acts as an ATP-dependent pump, pulling dsDNA into and through the RuvAB complex. RuvB forms 2 homohexamers on either side of HJ DNA bound by 1 or 2 RuvA tetramers; 4 subunits per hexamer contact DNA at a time. Coordinated motions by a converter formed by DNA-disengaged RuvB subunits stimulates ATP hydrolysis and nucleotide exchange. Immobilization of the converter enables RuvB to convert the ATP-contained energy into a lever motion, pulling 2 nucleotides of DNA out of the RuvA tetramer per ATP hydrolyzed, thus driving DNA branch migration. The RuvB motors rotate together with the DNA substrate, which together with the progressing nucleotide cycle form the mechanistic basis for DNA recombination by continuous HJ branch migration. Branch migration allows RuvC to scan DNA until it finds its consensus sequence, where it cleaves and resolves cruciform DNA. The polypeptide is Holliday junction branch migration complex subunit RuvB (Mycolicibacterium smegmatis (strain ATCC 700084 / mc(2)155) (Mycobacterium smegmatis)).